Reading from the N-terminus, the 441-residue chain is Zinc finger protein ZIC 3 (441 aa).

The C2H2-type 1; atypical zinc finger occupies 222–257 (LSCKWLEESTMNHPQKTCDRTFSSMHELVTHMTMEH). The C2H2-type 2; atypical zinc-finger motif lies at 266-293 (HICYWEECPRGGKSFKAKYKLVNHIRVH). 3 consecutive C2H2-type zinc fingers follow at residues 299–323 (FPCP…KRTH), 329–353 (FKCE…MHVH), and 359–381 (YICK…MKVH). A disordered region spans residues 375-441 (RKHMKVHESQ…LPPNFNEWYV (67 aa)). The segment covering 383–399 (SQGSDSSPAASSGYESA) has biased composition (low complexity). Over residues 406–429 (SANSEEPSKNSSATHQTNNNSHNT) the composition is skewed to polar residues.

This sequence belongs to the GLI C2H2-type zinc-finger protein family. As to expression, first detected at early gastrula (stage 10.25) in the dorsal lip and prospective neural plate. Also expressed in the mesoderm at early gastrulation, with expression strongest on the dorsal side. Mesodermal expression continues at stage 12 but is hardly detectable after stage 14. As gastrulation proceeds, expression decreases in the dorsal lip and increases in the prospective neural plate. At the neural plate stage (stage 14), expressed strongly in the prospective mesencephalon and anterior rhombencephalon, after which expression becomes stronger in the anterior neural folds. At early tailbud stage (stage 20), expression becomes restricted to the dorsal region of forebrain, midbrain and hindbrain, and weakly to the dorsal trunk. After mid-tailbud stage, expression decreases in the diencephalon, appears in the lateral mesoderm of the tailbud region and becomes restricted in the dorsal part of the neural tube.

The protein localises to the nucleus. It localises to the cytoplasm. Functionally, probably acts as a transcriptional activator. May bind to the minimal GLI-consensus sequence 5'-GGGTGGTC-3'. Can determine the ectodermal cell fate and promote the earliest step of neural and neural crest development. Involved in establishing left-right asymmetry in the embryo. In Xenopus laevis (African clawed frog), this protein is Zinc finger protein ZIC 3 (zic3).